Here is a 1997-residue protein sequence, read N- to C-terminus: Otoferlin (1997 aa).

One can recognise a C2 1 domain in the interval 1 to 98 (MALIVHLKTV…VEENRVEVTD (98 aa)). The Cytoplasmic segment spans residues 1–1963 (MALIVHLKTV…ARYFLWHTYR (1963 aa)). Residues 140-167 (QEEKDSQETDGLLPGSRPSTRISGEKSF) are disordered. C2 domains follow at residues 235-356 (KRSK…HKWA) and 399-530 (IEGN…FLPT). The tract at residues 643 to 692 (VDGMSRPLRPRPRKEPGDEEEVDLIQNSSDDEGDEAGDLASVSSTPPMRP) is disordered. Acidic residues predominate over residues 659–679 (GDEEEVDLIQNSSDDEGDEAG). A coiled-coil region spans residues 791-820 (RERLKSCMRELESMGQQAKSLRAQVKRHTV). C2 domains lie at 943–1068 (LHSF…PPRF) and 1115–1241 (RGPI…PNWN). Residues Asp-975, Asp-981, Asp-1037, Asp-1039, and Asp-1045 each contribute to the Ca(2+) site. Disordered stretches follow at residues 1253-1272 (LRNGGPSSRPTGEVVVSMEP), 1296-1326 (DVAEDEKERKKKKKKGPSEEPEEEEPDESML), and 1343-1402 (LRQH…EKKK). Composition is skewed to acidic residues over residues 1314-1325 (EEPEEEEPDESM) and 1352-1361 (DLEEKEEMES). Basic and acidic residues predominate over residues 1370-1383 (KSKEKSRAAKEEKK). C2 domains follow at residues 1464–1593 (LPED…ATCG) and 1714–1865 (DMPA…KQCT). Asp-1508, Asp-1514, Asp-1563, Asp-1565, Asp-1571, Asp-1836, Ser-1839, and Asp-1842 together coordinate Ca(2+). The helical transmembrane segment at 1964–1984 (WLLLKFLLLFLLLLLFALFLY) threads the bilayer. At 1985–1997 (SLPGYLAKKILGA) the chain is on the extracellular side.

This sequence belongs to the ferlin family. Interacts with SNAP25; the interaction is direct. Interacts with STX1; the interaction is direct. Interacts with RAB8B. Requires Ca(2+) as cofactor. In terms of tissue distribution, isoform 1 is expressed in cochlea and brain. Expressed in the cochlear and vestibular hair cells. Expressed in both inner and outer hair cells (IHCs and OHCs) and cochlear ganglions neurons at postnatal day 2 (P2) and 6 (P6). Expressed only in IHCs at postnatal day 60 (P60) (at protein level). Strongly expressed in brain and inner ear. In the inner ear, it is mainly expressed in the cochlear IHC and vestibular type I sensory hair cells. Weakly expressed in eye, heart, skeletal muscle, liver, kidney, lung and testis.

The protein resides in the cytoplasmic vesicle. The protein localises to the secretory vesicle. Its subcellular location is the synaptic vesicle membrane. It is found in the basolateral cell membrane. It localises to the endoplasmic reticulum membrane. The protein resides in the golgi apparatus membrane. The protein localises to the presynaptic cell membrane. Its subcellular location is the cell membrane. Its function is as follows. Key calcium ion sensor involved in the Ca(2+)-triggered synaptic vesicle-plasma membrane fusion and in the control of neurotransmitter release at these output synapses. Interacts in a calcium-dependent manner to the presynaptic SNARE proteins at ribbon synapses of cochlear inner hair cells (IHCs) to trigger exocytosis of neurotransmitter. Also essential to synaptic exocytosis in immature outer hair cells (OHCs). May also play a role within the recycling of endosomes. The sequence is that of Otoferlin (Otof) from Mus musculus (Mouse).